Here is a 429-residue protein sequence, read N- to C-terminus: Enolase (429 aa).

Glutamine 166 lines the (2R)-2-phosphoglycerate pocket. The Proton donor role is filled by glutamate 208. Positions 245, 289, and 316 each coordinate Mg(2+). Lysine 341, arginine 370, serine 371, and lysine 392 together coordinate (2R)-2-phosphoglycerate. The active-site Proton acceptor is the lysine 341.

The protein belongs to the enolase family. In terms of assembly, component of the RNA degradosome, a multiprotein complex involved in RNA processing and mRNA degradation. Mg(2+) serves as cofactor.

The protein resides in the cytoplasm. The protein localises to the secreted. Its subcellular location is the cell surface. It carries out the reaction (2R)-2-phosphoglycerate = phosphoenolpyruvate + H2O. The protein operates within carbohydrate degradation; glycolysis; pyruvate from D-glyceraldehyde 3-phosphate: step 4/5. In terms of biological role, catalyzes the reversible conversion of 2-phosphoglycerate (2-PG) into phosphoenolpyruvate (PEP). It is essential for the degradation of carbohydrates via glycolysis. The protein is Enolase of Acinetobacter baumannii (strain AB307-0294).